We begin with the raw amino-acid sequence, 58 residues long: Metallothionein-2B (58 aa).

A beta region spans residues 1-29 (MPDPCCNDKCECKEGECKTGCKCKSCRCP). A divalent metal cation contacts are provided by C5, C6, C10, C12, C17, C21, C23, C26, C28, C31, C34, C38, C40, C46, C50, C54, C56, and C57. Residues 30-58 (PCDKCSSECKCTSKEECSKTCSKPCSCCP) form an alpha region.

This sequence belongs to the metallothionein superfamily. Type 3 family.

In terms of biological role, binds six divalent metal ions. Known to bind copper and cadmium. In Callinectes sapidus (Blue crab), this protein is Metallothionein-2B.